A 256-amino-acid polypeptide reads, in one-letter code: MKLISTIAAATTAFGAPNADHTSRQLIFGGGIIPSGTKTYTAGIRTSADGDTYCGGSLISPTHVLTTSICTGYKEPKFVSVGTHYLNGTQDGEQIKVVSAQNHTSLNFSSGTYDFALLTLEKPSKFIPVKLPKADDSDIKPGMWSKAMGWGVTSYPNGSLSYELQGVSLEVWANDECSQVFNIGDTSVCAGGLPGKDACVADTGGPLIKENGLGDLDDILIGLVNWGYGCGDAGSPTVYSRVSTATEWINSVTKGQ.

An N-terminal signal peptide occupies residues 1-15 (MKLISTIAAATTAFG). In terms of domain architecture, Peptidase S1 spans 27-254 (IFGGGIIPSG…ATEWINSVTK (228 aa)). Cysteines 54 and 70 form a disulfide. N-linked (GlcNAc...) asparagine glycans are attached at residues Asn87, Asn102, Asn107, and Asn157. Intrachain disulfides connect Cys177-Cys189 and Cys199-Cys230.

It belongs to the peptidase S1 family. As to quaternary structure, forms an apoplastic complex with host endoglucanases in tomato leaves during P.infestans infection.

The protein localises to the secreted. Its function is as follows. Secreted effector that suppresses host plant glucan elicitor-mediated defense responses. Targets host endoglucanases and inhibits the endoglucanase-mediated release of elicitor-active glucan oligosaccharides from P.infestans cell walls. The protein is Glucanase inhibitor protein 2 of Phytophthora infestans (Potato late blight agent).